Reading from the N-terminus, the 484-residue chain is GTPase Obg (484 aa).

Residues 7 to 164 enclose the Obg domain; sequence PRFVDRVVIH…RDLTLELKTV (158 aa). A disordered region spans residues 21-43; it reads SGGNGCASVHREKFKPLGGPDGG. In terms of domain architecture, OBG-type G spans 165–345; the sequence is ADVGLVGFPS…LIFGLSQMIS (181 aa). GTP is bound by residues 171-178, 196-200, 217-220, 297-300, and 326-328; these read GFPSAGKS, FTTLV, DVPG, NKID, and STA. The Mg(2+) site is built by Ser-178 and Thr-198. One can recognise an OCT domain in the interval 363-441; that stretch reads PIPVDDSGFT…IGEMTFDWEP (79 aa). Residues 439–484 are disordered; it reads WEPQTPAGEPVAMSGRGTDPRLDSNKRVGAAERKAARSRRREHGDG. Basic and acidic residues predominate over residues 456–473; the sequence is TDPRLDSNKRVGAAERKA. Positions 474–484 are enriched in basic residues; it reads ARSRRREHGDG.

Belongs to the TRAFAC class OBG-HflX-like GTPase superfamily. OBG GTPase family. As to quaternary structure, monomer. Mg(2+) is required as a cofactor.

The protein resides in the cytoplasm. Its function is as follows. An essential GTPase which binds GTP, GDP and possibly (p)ppGpp with moderate affinity, with high nucleotide exchange rates and a fairly low GTP hydrolysis rate. Plays a role in control of the cell cycle, stress response, ribosome biogenesis and in those bacteria that undergo differentiation, in morphogenesis control. The protein is GTPase Obg of Mycobacterium tuberculosis (strain CDC 1551 / Oshkosh).